Here is a 78-residue protein sequence, read N- to C-terminus: Small ribosomal subunit protein bS18 (78 aa).

This sequence belongs to the bacterial ribosomal protein bS18 family. As to quaternary structure, part of the 30S ribosomal subunit. Forms a tight heterodimer with protein bS6.

Its function is as follows. Binds as a heterodimer with protein bS6 to the central domain of the 16S rRNA, where it helps stabilize the platform of the 30S subunit. In Lactobacillus delbrueckii subsp. bulgaricus (strain ATCC BAA-365 / Lb-18), this protein is Small ribosomal subunit protein bS18.